Consider the following 447-residue polypeptide: Elongation factor 1-alpha (447 aa).

The 226-residue stretch at 5–230 folds into the tr-type G domain; sequence KVHINIVVIG…DNINEPKRPS (226 aa). The interval 14–21 is G1; that stretch reads GHVDSGKS. 14–21 serves as a coordination point for GTP; the sequence is GHVDSGKS. Lys55 bears the N6,N6-dimethyllysine mark. The tract at residues 70–74 is G2; it reads GITID. Lys79 carries the N6,N6,N6-trimethyllysine modification. The tract at residues 91–94 is G3; it reads DAPG. GTP is bound by residues 91–95 and 153–156; these read DAPGH and NKMD. The G4 stretch occupies residues 153 to 156; it reads NKMD. Lys187 is modified (N6,N6,N6-trimethyllysine). The G5 stretch occupies residues 194 to 196; that stretch reads SGF. Lys261 is subject to N6-methyllysine. The residue at position 289 (Glu289) is a 5-glutamyl glycerylphosphorylethanolamine. Lys306 carries the N6,N6,N6-trimethyllysine modification. Residue Glu362 is modified to 5-glutamyl glycerylphosphorylethanolamine. Lys396 carries the post-translational modification N6,N6,N6-trimethyllysine.

The protein belongs to the TRAFAC class translation factor GTPase superfamily. Classic translation factor GTPase family. EF-Tu/EF-1A subfamily.

It is found in the cytoplasm. In terms of biological role, this protein promotes the GTP-dependent binding of aminoacyl-tRNA to the A-site of ribosomes during protein biosynthesis. The protein is Elongation factor 1-alpha of Pisum sativum (Garden pea).